The primary structure comprises 141 residues: Hemoglobin subunit alpha (141 aa).

The 141-residue stretch at 1–141 folds into the Globin domain; it reads VLSSTDKSNV…VSTVLTSKYR (141 aa). Phosphoserine is present on Ser-3. Residues Lys-7 and Lys-11 each carry the N6-succinyllysine modification. Lys-16 carries the N6-acetyllysine; alternate modification. Lys-16 is modified (N6-succinyllysine; alternate). Phosphotyrosine is present on Tyr-24. Ser-35 is subject to Phosphoserine. Lys-40 carries the N6-succinyllysine modification. His-58 provides a ligand contact to O2. A heme b-binding site is contributed by His-87. Position 102 is a phosphoserine (Ser-102). Phosphothreonine is present on Thr-108. Phosphoserine occurs at positions 124 and 131. Residues Thr-134 and Thr-137 each carry the phosphothreonine modification. Ser-138 bears the Phosphoserine mark.

The protein belongs to the globin family. Heterotetramer of two alpha chains and two beta chains. In terms of tissue distribution, red blood cells.

Involved in oxygen transport from the lung to the various peripheral tissues. Functionally, hemopressin acts as an antagonist peptide of the cannabinoid receptor CNR1. Hemopressin-binding efficiently blocks cannabinoid receptor CNR1 and subsequent signaling. The sequence is that of Hemoglobin subunit alpha (HBA) from Pteropus alecto (Black flying fox).